The primary structure comprises 252 residues: Large ribosomal subunit protein uL4 (252 aa).

It belongs to the universal ribosomal protein uL4 family. In terms of assembly, part of the 50S ribosomal subunit.

Functionally, one of the primary rRNA binding proteins, this protein initially binds near the 5'-end of the 23S rRNA. It is important during the early stages of 50S assembly. It makes multiple contacts with different domains of the 23S rRNA in the assembled 50S subunit and ribosome. In terms of biological role, forms part of the polypeptide exit tunnel. This is Large ribosomal subunit protein uL4 from Methanococcus aeolicus (strain ATCC BAA-1280 / DSM 17508 / OCM 812 / Nankai-3).